Here is a 210-residue protein sequence, read N- to C-terminus: MEGFFFVRNQNIKFSDNVNYHYRFNINSCAKFLAFWDYFSGALVEHSHAEKCIHFYHENDLRDSCNTESMLDKLMLRFIFSSDQNVSNALAMIRMTESYHLVLYLLRTIEKEKEVRIKSLTEHYGVSEAYFRSLCRKALGAKVKEQLNTWRLVNGLLDVFLHNQTITSAAMNNGYASTSHFSNEIKTRLGFSARELSNITFLVKKINEKI.

Residues 99–199 (YHLVLYLLRT…GFSARELSNI (101 aa)) enclose the HTH araC/xylS-type domain. DNA-binding regions (H-T-H motif) lie at residues 118 to 139 (KSLT…RKAL) and 166 to 189 (ITSA…KTRL).

In terms of biological role, necessary for the secretion of ipa invasins. Probable transcriptional regulatory protein. This is Transcriptional regulator MxiE (mxiE) from Shigella flexneri.